We begin with the raw amino-acid sequence, 125 residues long: Multifunctional methyltransferase subunit TRM112-like protein (125 aa).

Residues 2-119 (RLLTHNLLSS…SRGIPNMLLS (118 aa)) enclose the TRM112 domain. Position 119 is a phosphoserine (serine 119).

This sequence belongs to the TRM112 family. As to quaternary structure, part of the heterodimeric BUD23-TRM112 methyltransferase complex; this heterodimerization is necessary for the metabolic stability and activity of the catalytic subunit BUD23. Part of the heterodimeric N6AMT1-TRM112 methyltransferase complex; this heterodimerization is necessary for S-adenosyl-L-methionine-binding to N6AMT1/HEMK2. Part of the heterodimeric ALKBH8-TRM112 methyltransferase complex. Part of the heterodimeric METTL5-TRM112 methyltransferase complex; this heterodimerization is necessary for the stability of the catalytic subunit METTL5. Part of the heterodimeric THUMPD3-TRM112 methyltransferase complex; this complex forms an active tRNA methyltransferase, where TRMT112 acts as an activator of the catalytic subunit THUMPD3. Part of the heterodimeric THUMPD2-TRM112 methyltransferase complex; this complex forms an active tRNA methyltransferase, where TRMT112 acts as an activator of the catalytic subunit THUMPD2. Part of the heterodimeric TRMT11-TRM112 methyltransferase complex; this complex forms an active tRNA methyltransferase, where TRMT112 acts as an activator of the catalytic subunit TRMT11.

Its subcellular location is the nucleus. The protein resides in the nucleoplasm. It localises to the cytoplasm. It is found in the perinuclear region. Functionally, acts as an activator of both rRNA/tRNA and protein methyltransferases. Together with methyltransferase BUD23, methylates the N(7) position of a guanine in 18S rRNA. The heterodimer with HEMK2/N6AMT1 catalyzes N5-methylation of ETF1 on 'Gln-185', using S-adenosyl L-methionine as methyl donor. The heterodimer with ALKBH8 catalyzes the methylation of 5-carboxymethyl uridine to 5-methylcarboxymethyl uridine at the wobble position of the anticodon loop in target tRNA species. Together with methyltransferase THUMPD3, catalyzes the formation of N(2)-methylguanosine at position 6 in a broad range of tRNA substrates and at position 7 of tRNA(Trp). Involved in the pre-rRNA processing steps leading to small-subunit rRNA production. Together with methyltransferase METTL5, specifically methylates the 6th position of adenine in position 1832 of 18S rRNA. This is Multifunctional methyltransferase subunit TRM112-like protein (TRMT112) from Bos taurus (Bovine).